A 261-amino-acid polypeptide reads, in one-letter code: 5'-nucleotidase SurE (261 aa).

Residues Asp-8, Asp-9, Ser-43, and Asn-96 each contribute to the a divalent metal cation site.

It belongs to the SurE nucleotidase family. A divalent metal cation serves as cofactor.

The protein resides in the cytoplasm. It carries out the reaction a ribonucleoside 5'-phosphate + H2O = a ribonucleoside + phosphate. Its function is as follows. Nucleotidase that shows phosphatase activity on nucleoside 5'-monophosphates. The sequence is that of 5'-nucleotidase SurE from Cereibacter sphaeroides (strain KD131 / KCTC 12085) (Rhodobacter sphaeroides).